The following is a 163-amino-acid chain: Neurotrophin-3 (163 aa).

The first 3 residues, Ile-1–Ser-3, serve as a signal peptide directing secretion. Positions Ser-4 to Arg-119 are excised as a propeptide. Positions Gln-36 to Gln-61 are disordered. Residues Lys-49–Gln-61 show a composition bias toward basic and acidic residues. An N-linked (GlcNAc...) asparagine glycan is attached at Asn-112.

The protein belongs to the NGF-beta family.

It localises to the secreted. Seems to promote the survival of visceral and proprioceptive sensory neurons. The polypeptide is Neurotrophin-3 (NTF3) (Boa constrictor (Boa)).